The primary structure comprises 247 residues: Carboxy-S-adenosyl-L-methionine synthase (247 aa).

Residues Tyr39, 64-66 (GCS), 89-90 (DN), 117-118 (DI), Asn132, and Arg199 each bind S-adenosyl-L-methionine.

This sequence belongs to the class I-like SAM-binding methyltransferase superfamily. Cx-SAM synthase family. As to quaternary structure, homodimer.

It catalyses the reaction prephenate + S-adenosyl-L-methionine = carboxy-S-adenosyl-L-methionine + 3-phenylpyruvate + H2O. Functionally, catalyzes the conversion of S-adenosyl-L-methionine (SAM) to carboxy-S-adenosyl-L-methionine (Cx-SAM). This Escherichia fergusonii (strain ATCC 35469 / DSM 13698 / CCUG 18766 / IAM 14443 / JCM 21226 / LMG 7866 / NBRC 102419 / NCTC 12128 / CDC 0568-73) protein is Carboxy-S-adenosyl-L-methionine synthase.